Reading from the N-terminus, the 172-residue chain is Keratin-associated protein 13-3 (172 aa).

A run of 5 repeats spans residues 46–55 (CQLGSSLYRG), 56–65 (CQETCWRPNS), 66–75 (CQTLCVESSP), 76–85 (CHTSCYYPRT), and 92–101 (CLTMHVGSRG). Residues 46 to 101 (CQLGSSLYRGCQETCWRPNSCQTLCVESSPCHTSCYYPRTHMLCNSCLTMHVGSRG) form a 5 X 10 AA approximate repeats region.

Belongs to the PMG family. As to quaternary structure, interacts with hair keratins.

Functionally, in the hair cortex, hair keratin intermediate filaments are embedded in an interfilamentous matrix, consisting of hair keratin-associated proteins (KRTAP), which are essential for the formation of a rigid and resistant hair shaft through their extensive disulfide bond cross-linking with abundant cysteine residues of hair keratins. The matrix proteins include the high-sulfur and high-glycine-tyrosine keratins. This chain is Keratin-associated protein 13-3 (KRTAP13-3), found in Homo sapiens (Human).